Reading from the N-terminus, the 555-residue chain is Acetyl-coenzyme A thioesterase (555 aa).

The 113-residue stretch at 5-117 (APGEVVMSQA…FSTFVAKPVG (113 aa)) folds into the HotDog ACOT-type 1 domain. At lysine 33 the chain carries N6-succinyllysine. CoA is bound by residues 53 to 55 (TAS), 82 to 84 (STS), and arginine 144. Residues lysine 159 and lysine 228 each carry the N6-succinyllysine modification. In terms of domain architecture, HotDog ACOT-type 2 spans 179-294 (RGTSVQSIEL…FLIYNAADDK (116 aa)). CoA is bound at residue 234 to 236 (KFR). The 210-residue stretch at 340-549 (CIHWDISKQA…IQFLENPPDD (210 aa)) folds into the START domain.

Homodimer or homotetramer.

It localises to the cytoplasm. The protein localises to the cytosol. The catalysed reaction is acetyl-CoA + H2O = acetate + CoA + H(+). It catalyses the reaction butanoyl-CoA + H2O = butanoate + CoA + H(+). The enzyme catalyses hexanoyl-CoA + H2O = hexanoate + CoA + H(+). Its pathway is lipid metabolism; fatty acid metabolism. With respect to regulation, inhibited by ADP. Active in the presence of ATP. Cold labile, it dissociates into inactive monomers at low temperature. In terms of biological role, catalyzes the hydrolysis of acyl-CoAs into free fatty acids and coenzyme A (CoASH), regulating their respective intracellular levels. Preferentially hydrolyzes acetyl-CoA. The sequence is that of Acetyl-coenzyme A thioesterase (ACOT12) from Homo sapiens (Human).